A 65-amino-acid chain; its full sequence is Small ribosomal subunit protein bS21 (65 aa).

The protein belongs to the bacterial ribosomal protein bS21 family.

The sequence is that of Small ribosomal subunit protein bS21 from Chlorobium limicola (strain DSM 245 / NBRC 103803 / 6330).